We begin with the raw amino-acid sequence, 127 residues long: Glycine cleavage system H protein (127 aa).

The Lipoyl-binding domain maps to 23 to 105 (KVSVGITDFA…YGEGWIAVIE (83 aa)). An N6-lipoyllysine modification is found at Lys64.

It belongs to the GcvH family. The glycine cleavage system is composed of four proteins: P, T, L and H. (R)-lipoate serves as cofactor.

In terms of biological role, the glycine cleavage system catalyzes the degradation of glycine. The H protein shuttles the methylamine group of glycine from the P protein to the T protein. This is Glycine cleavage system H protein from Coprothermobacter proteolyticus (strain ATCC 35245 / DSM 5265 / OCM 4 / BT).